The sequence spans 276 residues: 2-dehydro-3-deoxyphosphooctonate aldolase (276 aa).

It belongs to the KdsA family.

The protein localises to the cytoplasm. The catalysed reaction is D-arabinose 5-phosphate + phosphoenolpyruvate + H2O = 3-deoxy-alpha-D-manno-2-octulosonate-8-phosphate + phosphate. The protein operates within carbohydrate biosynthesis; 3-deoxy-D-manno-octulosonate biosynthesis; 3-deoxy-D-manno-octulosonate from D-ribulose 5-phosphate: step 2/3. The chain is 2-dehydro-3-deoxyphosphooctonate aldolase from Stenotrophomonas maltophilia (strain K279a).